The sequence spans 620 residues: MYND-type zinc finger protein MUB1 (620 aa).

The MYND-type; degenerate zinc finger occupies 514 to 555 (NFSCGKWEDFPRQFAKCRRCKRTKYCSRKCQLKAWGYHRYWC). The Zn(2+) site is built by Cys530, Cys533, His551, and Cys555. Polar residues predominate over residues 563–606 (MRSTNTTTGVNTPNEPSSLNATATTAADVSNSTSTFTPNISTTV). Positions 563–620 (MRSTNTTTGVNTPNEPSSLNATATTAADVSNSTSTFTPNISTTVPDEISNRDENSIPE) are disordered. Residues 610–620 (ISNRDENSIPE) show a composition bias toward basic and acidic residues.

It belongs to the MUB1/samB family. As to quaternary structure, interacts with UBR2 and RPN4.

It is found in the cytoplasm. In terms of biological role, involved in the determination of the onset of polarized growth. Required for the ubiquitin-dependent degradation of RPN4. Cooperates with UBR2 to transfer ubiquitin from RAD6 to RPN4. In Saccharomyces cerevisiae (strain ATCC 204508 / S288c) (Baker's yeast), this protein is MYND-type zinc finger protein MUB1 (MUB1).